A 784-amino-acid chain; its full sequence is Ribosome biogenesis protein BOP1 homolog (784 aa).

Basic residues predominate over residues 1 to 11; the sequence is MTKKLALKRRG. Residues 1 to 159 are disordered; it reads MTKKLALKRR…DSDTSDEEDI (159 aa). 4 stretches are compositionally biased toward acidic residues: residues 27–36, 45–54, 62–73, and 84–111; these read SENEEEEEDL, EDSTDDEGID, SEELQFESDEEG, and AEEDEESSDEEDNEEEGSTDEEEVEDEE. Basic and acidic residues-rich tracts occupy residues 112 to 123 and 138 to 148; these read KVSKSKQSDDKP and LPKRDSSKPEY. Positions 149 to 158 are enriched in acidic residues; that stretch reads QDSDTSDEED. 7 WD repeats span residues 445–486, 488–526, 570–612, 615–653, 656–695, 699–738, and 754–784; these read GHTD…RTIE, DEVVRCVAWCPNPKLSIIAVATGNRLLLVNPKVGDKVLV, THFK…SQIP, KSKGLIQFVLFHPVKPCFFVATQHNIRIYDLVKQELVKK, TNSKWISGMSIHPKGDNLLVSTYDKKMLWFDLDLSTKPYQ, LHRNAVRSVAFHRRYPLFASGSDDQAVIVSHGMVYNDLLQ, and RDEFGVLDVNWHPVQPWVFSTGADSTIRLYT.

It belongs to the WD repeat BOP1/ERB1 family.

The protein resides in the nucleus. Its subcellular location is the nucleolus. The protein localises to the nucleoplasm. Required for maturation of ribosomal RNAs and formation of the large ribosomal subunit. The chain is Ribosome biogenesis protein BOP1 homolog from Drosophila sechellia (Fruit fly).